Here is a 373-residue protein sequence, read N- to C-terminus: sn-glycerol-3-phosphate import ATP-binding protein UgpC (373 aa).

One can recognise an ABC transporter domain in the interval 4–235; that stretch reads LTLSNITKSY…PASVFVATFI (232 aa). 37-44 is a binding site for ATP; the sequence is GPSGCGKS.

This sequence belongs to the ABC transporter superfamily. sn-glycerol-3-phosphate importer (TC 3.A.1.1.3) family. The complex is composed of two ATP-binding proteins (UgpC), two transmembrane proteins (UgpA and UgpE) and a solute-binding protein (UgpB).

It is found in the cell inner membrane. The catalysed reaction is sn-glycerol 3-phosphate(out) + ATP + H2O = sn-glycerol 3-phosphate(in) + ADP + phosphate + H(+). Its function is as follows. Part of the ABC transporter complex UgpBAEC involved in sn-glycerol-3-phosphate (G3P) import. Responsible for energy coupling to the transport system. The chain is sn-glycerol-3-phosphate import ATP-binding protein UgpC from Psychromonas ingrahamii (strain DSM 17664 / CCUG 51855 / 37).